Reading from the N-terminus, the 209-residue chain is Large ribosomal subunit protein uL3 (209 aa).

Q150 carries the post-translational modification N5-methylglutamine.

This sequence belongs to the universal ribosomal protein uL3 family. As to quaternary structure, part of the 50S ribosomal subunit. Forms a cluster with proteins L14 and L19. Post-translationally, methylated by PrmB.

Its function is as follows. One of the primary rRNA binding proteins, it binds directly near the 3'-end of the 23S rRNA, where it nucleates assembly of the 50S subunit. The sequence is that of Large ribosomal subunit protein uL3 from Vibrio parahaemolyticus serotype O3:K6 (strain RIMD 2210633).